The primary structure comprises 1183 residues: Translation initiation factor IF-2 (1183 aa).

Disordered regions lie at residues 65 to 512 (SSKN…KVHI) and 540 to 579 (LARP…AMEL). A compositionally biased stretch (basic and acidic residues) spans 83–99 (TQKDQKTEPKKKNHDQT). Residues 100–130 (ELSQAKLNTLLKPSQTLIKSQGSSQANNQKA) are compositionally biased toward polar residues. Basic and acidic residues predominate over residues 220 to 229 (PKIDIQDKKP). Polar residues predominate over residues 231 to 270 (QPNNQKAKTRINQGEISPQKVGQGNIQKIKSQNKQNAPSR). Positions 288 to 304 (IRKEKPVNKPHTNEVRN) are enriched in basic and acidic residues. Composition is skewed to polar residues over residues 321–336 (ANRQ…NNRI) and 357–367 (NRTTQGQNRPG). A compositionally biased stretch (basic and acidic residues) spans 485–499 (GRPDWDDSAKLDALR). Basic residues-rich tracts occupy residues 544 to 553 (SKPKVGKRNN) and 560 to 574 (LKKR…RQRR). Residues 675–847 (RRPPVVTVMG…VLLVTEVEDL (173 aa)) form the tr-type G domain. Positions 684 to 691 (GHVDHGKT) are G1. Residue 684 to 691 (GHVDHGKT) participates in GTP binding. The G2 stretch occupies residues 709 to 713 (GITQH). Positions 734-737 (DTPG) are G3. Residues 734–738 (DTPGH) and 788–791 (NKID) contribute to the GTP site. The segment at 788-791 (NKID) is G4. Positions 824 to 826 (SAI) are G5.

This sequence belongs to the TRAFAC class translation factor GTPase superfamily. Classic translation factor GTPase family. IF-2 subfamily.

The protein resides in the cytoplasm. In terms of biological role, one of the essential components for the initiation of protein synthesis. Protects formylmethionyl-tRNA from spontaneous hydrolysis and promotes its binding to the 30S ribosomal subunits. Also involved in the hydrolysis of GTP during the formation of the 70S ribosomal complex. This chain is Translation initiation factor IF-2, found in Prochlorococcus marinus (strain NATL2A).